Reading from the N-terminus, the 250-residue chain is Keratin-associated protein 9-1 (250 aa).

32 consecutive repeat copies span residues 8 to 12 (CCQPT), 13 to 17 (CCRTT), 18 to 22 (CCRTT), 37 to 41 (CCQPS), 42 to 46 (CCVPS), 51 to 55 (CCHPT), 56 to 60 (CCQNT), 61 to 65 (CCRTT), 66 to 70 (CCQPT), 75 to 79 (CCQPS), 80 to 84 (CCSTP), 85 to 89 (CCQPT), 90 to 94 (CCGSS), 95 to 99 (CCGQT), 105 to 109 (CCQPI), 114 to 117 (CCQP), 118 to 121 (CCHP), 133 to 137 (CCQPT), 138 to 142 (CCQPT), 143 to 147 (CCRNT), 153 to 157 (CCGSS), 162 to 166 (CCHPT), 167 to 171 (CCQTI), 176 to 180 (CCQPS), 185 to 189 (CCSTP), 190 to 194 (CCQPT), 214 to 218 (CCRPT), 219 to 223 (CCQTT), 229 to 233 (CCRPS), 234 to 238 (CCCSP), 239 to 243 (CCVSS), and 244 to 248 (CCQPS). A 32 X 5 AA repeats of C-C-[CGSVRQH]-[SQTNP]-[PTSI] region spans residues 8–248 (CCQPTCCRTT…CCVSSCCQPS (241 aa)).

This sequence belongs to the KRTAP type 9 family. In terms of assembly, interacts with hair keratins.

In terms of biological role, in the hair cortex, hair keratin intermediate filaments are embedded in an interfilamentous matrix, consisting of hair keratin-associated proteins (KRTAP), which are essential for the formation of a rigid and resistant hair shaft through their extensive disulfide bond cross-linking with abundant cysteine residues of hair keratins. The matrix proteins include the high-sulfur and high-glycine-tyrosine keratins. The sequence is that of Keratin-associated protein 9-1 from Homo sapiens (Human).